The following is a 331-amino-acid chain: D-lactate/D-glycerate dehydrogenase (331 aa).

NAD(+)-binding positions include 154-155 (RI), aspartate 174, 205-206 (VP), asparagine 211, 232-234 (FAR), and aspartate 258. Residue arginine 234 is part of the active site. Residue glutamate 263 is part of the active site. The active-site Proton donor is histidine 295.

It belongs to the D-isomer specific 2-hydroxyacid dehydrogenase family. Homodimer.

The enzyme catalyses (R)-lactate + NAD(+) = pyruvate + NADH + H(+). The catalysed reaction is (R)-glycerate + NAD(+) = 3-hydroxypyruvate + NADH + H(+). Its function is as follows. Has both D-lactate and D-glycerate dehydrogenase activities. Equally active on pyruvate and hydroxypyruvate. This is D-lactate/D-glycerate dehydrogenase from Pediococcus acidilactici.